The sequence spans 144 residues: Hemoglobin embryonic subunit alpha (144 aa).

The Globin domain occupies Ser3–Arg144. Residue His61 participates in O2 binding. Position 90 (His90) interacts with heme b.

This sequence belongs to the globin family. In terms of assembly, heterotetramer of two alpha chains and two beta chains. As to expression, red blood cells.

Involved in oxygen transport from gills to the various peripheral tissues. This chain is Hemoglobin embryonic subunit alpha, found in Oryzias latipes (Japanese rice fish).